Here is a 1050-residue protein sequence, read N- to C-terminus: Beta-galactosidase (1050 aa).

Substrate contacts are provided by Asn100 and Asp199. Asp199 is a binding site for Na(+). Residues Glu422, His424, and Glu467 each contribute to the Mg(2+) site. Substrate-binding positions include Glu467 and 543–546 (EYAH). Glu467 functions as the Proton donor in the catalytic mechanism. Glu543 serves as the catalytic Nucleophile. Residue Asn603 coordinates Mg(2+). Phe607 and Asn610 together coordinate Na(+). Substrate contacts are provided by Asn610 and Trp1025.

This sequence belongs to the glycosyl hydrolase 2 family. Homotetramer. Mg(2+) serves as cofactor. The cofactor is Na(+).

It catalyses the reaction Hydrolysis of terminal non-reducing beta-D-galactose residues in beta-D-galactosides.. The polypeptide is Beta-galactosidase (Yersinia pestis bv. Antiqua (strain Angola)).